A 288-amino-acid polypeptide reads, in one-letter code: NAD kinase (288 aa).

The Proton acceptor role is filled by Asp-73. Residues 73–74 (DG), Arg-78, 144–145 (NE), Asp-174, 185–190 (TAYSLS), and Ala-209 each bind NAD(+).

It belongs to the NAD kinase family. A divalent metal cation is required as a cofactor.

Its subcellular location is the cytoplasm. The catalysed reaction is NAD(+) + ATP = ADP + NADP(+) + H(+). Involved in the regulation of the intracellular balance of NAD and NADP, and is a key enzyme in the biosynthesis of NADP. Catalyzes specifically the phosphorylation on 2'-hydroxyl of the adenosine moiety of NAD to yield NADP. The protein is NAD kinase of Porphyromonas gingivalis (strain ATCC BAA-308 / W83).